We begin with the raw amino-acid sequence, 148 residues long: SsrA-binding protein (148 aa).

Residues 128–148 (ESIAKKDQERNLKREFKNNNR) form a disordered region.

It belongs to the SmpB family.

The protein localises to the cytoplasm. Its function is as follows. Required for rescue of stalled ribosomes mediated by trans-translation. Binds to transfer-messenger RNA (tmRNA), required for stable association of tmRNA with ribosomes. tmRNA and SmpB together mimic tRNA shape, replacing the anticodon stem-loop with SmpB. tmRNA is encoded by the ssrA gene; the 2 termini fold to resemble tRNA(Ala) and it encodes a 'tag peptide', a short internal open reading frame. During trans-translation Ala-aminoacylated tmRNA acts like a tRNA, entering the A-site of stalled ribosomes, displacing the stalled mRNA. The ribosome then switches to translate the ORF on the tmRNA; the nascent peptide is terminated with the 'tag peptide' encoded by the tmRNA and targeted for degradation. The ribosome is freed to recommence translation, which seems to be the essential function of trans-translation. This Fusobacterium nucleatum subsp. nucleatum (strain ATCC 25586 / DSM 15643 / BCRC 10681 / CIP 101130 / JCM 8532 / KCTC 2640 / LMG 13131 / VPI 4355) protein is SsrA-binding protein.